The following is a 281-amino-acid chain: Protoheme IX farnesyltransferase (281 aa).

Helical transmembrane passes span 16–36, 38–58, 75–95, 101–121, 129–149, 150–170, 202–224, 228–250, and 261–281; these read TFLL…GADF, FVIA…INMW, VPAG…IFAI, FLVS…DIVV, KSPY…LGGW, VAVQ…LLWI, ASWA…YVLL, IFYL…KFAL, and YKLA…GVFL.

Belongs to the UbiA prenyltransferase family. Protoheme IX farnesyltransferase subfamily.

It is found in the cell membrane. It catalyses the reaction heme b + (2E,6E)-farnesyl diphosphate + H2O = Fe(II)-heme o + diphosphate. It functions in the pathway porphyrin-containing compound metabolism; heme O biosynthesis; heme O from protoheme: step 1/1. Functionally, converts heme B (protoheme IX) to heme O by substitution of the vinyl group on carbon 2 of heme B porphyrin ring with a hydroxyethyl farnesyl side group. The protein is Protoheme IX farnesyltransferase of Archaeoglobus fulgidus (strain ATCC 49558 / DSM 4304 / JCM 9628 / NBRC 100126 / VC-16).